Reading from the N-terminus, the 150-residue chain is Putative pre-16S rRNA nuclease (150 aa).

It belongs to the YqgF nuclease family.

Its subcellular location is the cytoplasm. Its function is as follows. Could be a nuclease involved in processing of the 5'-end of pre-16S rRNA. The polypeptide is Putative pre-16S rRNA nuclease (Protochlamydia amoebophila (strain UWE25)).